The primary structure comprises 628 residues: tRNA uridine 5-carboxymethylaminomethyl modification enzyme MnmG (628 aa).

Residue 14–19 coordinates FAD; it reads GAGHAG. 273–287 serves as a coordination point for NAD(+); it reads GPRYCPSIEDKVVRF.

Belongs to the MnmG family. In terms of assembly, homodimer. Heterotetramer of two MnmE and two MnmG subunits. FAD is required as a cofactor.

It is found in the cytoplasm. Its function is as follows. NAD-binding protein involved in the addition of a carboxymethylaminomethyl (cmnm) group at the wobble position (U34) of certain tRNAs, forming tRNA-cmnm(5)s(2)U34. This chain is tRNA uridine 5-carboxymethylaminomethyl modification enzyme MnmG, found in Bacillus velezensis (strain DSM 23117 / BGSC 10A6 / LMG 26770 / FZB42) (Bacillus amyloliquefaciens subsp. plantarum).